The primary structure comprises 159 residues: 2-C-methyl-D-erythritol 2,4-cyclodiphosphate synthase (159 aa).

Residues aspartate 10 and histidine 12 each coordinate a divalent metal cation. 4-CDP-2-C-methyl-D-erythritol 2-phosphate is bound by residues 10-12 and 36-37; these read DVH and HS. Histidine 44 is a binding site for a divalent metal cation. 4-CDP-2-C-methyl-D-erythritol 2-phosphate is bound by residues 58 to 60, 63 to 67, 102 to 108, 134 to 137, phenylalanine 141, and arginine 144; these read DIG, FPDTD, AQAPKMA, and TTTE.

It belongs to the IspF family. As to quaternary structure, homotrimer. A divalent metal cation serves as cofactor.

The catalysed reaction is 4-CDP-2-C-methyl-D-erythritol 2-phosphate = 2-C-methyl-D-erythritol 2,4-cyclic diphosphate + CMP. Its pathway is isoprenoid biosynthesis; isopentenyl diphosphate biosynthesis via DXP pathway; isopentenyl diphosphate from 1-deoxy-D-xylulose 5-phosphate: step 4/6. Involved in the biosynthesis of isopentenyl diphosphate (IPP) and dimethylallyl diphosphate (DMAPP), two major building blocks of isoprenoid compounds. Catalyzes the conversion of 4-diphosphocytidyl-2-C-methyl-D-erythritol 2-phosphate (CDP-ME2P) to 2-C-methyl-D-erythritol 2,4-cyclodiphosphate (ME-CPP) with a corresponding release of cytidine 5-monophosphate (CMP). This Shewanella halifaxensis (strain HAW-EB4) protein is 2-C-methyl-D-erythritol 2,4-cyclodiphosphate synthase.